The primary structure comprises 418 residues: Light-independent protochlorophyllide reductase subunit N (418 aa).

[4Fe-4S] cluster is bound by residues Cys-17, Cys-42, and Cys-103.

The protein belongs to the BchN/ChlN family. In terms of assembly, protochlorophyllide reductase is composed of three subunits; ChlL, ChlN and ChlB. Forms a heterotetramer of two ChlB and two ChlN subunits. The cofactor is [4Fe-4S] cluster.

The enzyme catalyses chlorophyllide a + oxidized 2[4Fe-4S]-[ferredoxin] + 2 ADP + 2 phosphate = protochlorophyllide a + reduced 2[4Fe-4S]-[ferredoxin] + 2 ATP + 2 H2O. It participates in porphyrin-containing compound metabolism; chlorophyll biosynthesis (light-independent). Functionally, component of the dark-operative protochlorophyllide reductase (DPOR) that uses Mg-ATP and reduced ferredoxin to reduce ring D of protochlorophyllide (Pchlide) to form chlorophyllide a (Chlide). This reaction is light-independent. The NB-protein (ChlN-ChlB) is the catalytic component of the complex. In Prochlorococcus marinus (strain NATL2A), this protein is Light-independent protochlorophyllide reductase subunit N.